The chain runs to 880 residues: Alanine--tRNA ligase (880 aa).

The segment at T414–W443 is disordered. Residues H566, H570, C668, and H672 each coordinate Zn(2+).

This sequence belongs to the class-II aminoacyl-tRNA synthetase family. The cofactor is Zn(2+).

Its subcellular location is the cytoplasm. The catalysed reaction is tRNA(Ala) + L-alanine + ATP = L-alanyl-tRNA(Ala) + AMP + diphosphate. In terms of biological role, catalyzes the attachment of alanine to tRNA(Ala) in a two-step reaction: alanine is first activated by ATP to form Ala-AMP and then transferred to the acceptor end of tRNA(Ala). Also edits incorrectly charged Ser-tRNA(Ala) and Gly-tRNA(Ala) via its editing domain. This chain is Alanine--tRNA ligase, found in Alkaliphilus metalliredigens (strain QYMF).